The sequence spans 647 residues: Threonine--tRNA ligase (647 aa).

The TGS domain occupies 1 to 61; it reads MIKITFPDGA…EEDGSIEIVT (61 aa). Residues 240–538 form a catalytic region; sequence DHRKLGKELD…LIETYKGAFP (299 aa). Zn(2+) is bound by residues Cys334, His385, and His515.

It belongs to the class-II aminoacyl-tRNA synthetase family. Homodimer. Zn(2+) is required as a cofactor.

The protein resides in the cytoplasm. It catalyses the reaction tRNA(Thr) + L-threonine + ATP = L-threonyl-tRNA(Thr) + AMP + diphosphate + H(+). Catalyzes the attachment of threonine to tRNA(Thr) in a two-step reaction: L-threonine is first activated by ATP to form Thr-AMP and then transferred to the acceptor end of tRNA(Thr). Also edits incorrectly charged L-seryl-tRNA(Thr). In Streptococcus pyogenes serotype M2 (strain MGAS10270), this protein is Threonine--tRNA ligase.